The following is a 185-amino-acid chain: Ribosome-recycling factor (185 aa).

This sequence belongs to the RRF family.

The protein localises to the cytoplasm. Functionally, responsible for the release of ribosomes from messenger RNA at the termination of protein biosynthesis. May increase the efficiency of translation by recycling ribosomes from one round of translation to another. The chain is Ribosome-recycling factor from Salinispora arenicola (strain CNS-205).